The primary structure comprises 805 residues: Leucine--tRNA ligase (805 aa).

The short motif at 41-52 is the 'HIGH' region element; that stretch reads PYPSGAGLHVGH. The short motif at 577 to 581 is the 'KMSKS' region element; the sequence is KMSKS. An ATP-binding site is contributed by Lys580.

The protein belongs to the class-I aminoacyl-tRNA synthetase family.

It is found in the cytoplasm. It catalyses the reaction tRNA(Leu) + L-leucine + ATP = L-leucyl-tRNA(Leu) + AMP + diphosphate. This is Leucine--tRNA ligase from Staphylococcus aureus (strain USA300).